Here is a 242-residue protein sequence, read N- to C-terminus: uncharacterized protein (242 aa).

Disordered stretches follow at residues 43 to 70 (SRRS…TSKD) and 112 to 162 (RMSR…VTPR). Over residues 58-70 (QSVSGRKNSTSKD) the composition is skewed to polar residues. Composition is skewed to low complexity over residues 122–139 (ERAA…AGHA) and 147–162 (ADGA…VTPR).

This is an uncharacterized protein from Homo sapiens (Human).